The primary structure comprises 131 residues: Conotoxin Cal8.1 (131 aa).

The N-terminal stretch at 1–19 is a signal peptide; it reads MKLLLTLLLGSALMCITLA. The propeptide occupies 20–38; the sequence is DECGLGTHRPVKEVIDNVR.

Contains 4 disulfide bonds. In terms of tissue distribution, expressed by the venom duct.

It is found in the secreted. Its function is as follows. Probable neurotoxin with unknown target. Possibly targets ion channels. This Californiconus californicus (California cone) protein is Conotoxin Cal8.1.